The primary structure comprises 168 residues: Alpha-N-acetylgalactosamine-specific lectin (168 aa).

A signal peptide spans 1-18 (MAFFRALCFVLLVGFAAA). Residues 38–163 (YNGNCYRYFG…CSRAFAYVCK (126 aa)) enclose the C-type lectin domain. Cystine bridges form between Cys-59–Cys-162 and Cys-136–Cys-154.

In terms of assembly, monomer, homodimer and homooligomer.

In terms of biological role, alpha-N-acetylgalactosamine-specific lectin. The oligomeric form has Ca(2+)-dependent hemagglutination activity towards sheep erythrocytes. Its hemagglutination activity is inhibited by various monosaccharides, oligosaccharides and glycopeptides, including inhibition by GalNAc, blood group A trisaccharide, Tn antigen, mucin and asialomucin. The chain is Alpha-N-acetylgalactosamine-specific lectin from Patiria pectinifera (Starfish).